A 550-amino-acid chain; its full sequence is Mitochondrial distribution and morphology protein 12 (550 aa).

Positions 1 to 550 (MSIELNWETL…VYPSFWTFLV (550 aa)) constitute an SMP-LTD domain. Disordered regions lie at residues 62–168 (ITDP…PQDL), 218–356 (PPQW…TKYR), and 474–493 (TLAS…GGNT). A compositionally biased stretch (acidic residues) spans 69 to 90 (FYEEDPDVDYDDEDEDVEETHD). Positions 125–140 (VASSSSSSVGRGSAPR) are enriched in low complexity. Polar residues-rich tracts occupy residues 148–157 (PTKSNININT), 251–269 (PSHS…QTAS), 278–289 (TPTSFLRSGQQT), and 296–323 (VSTL…TAQE).

This sequence belongs to the MDM12 family. As to quaternary structure, component of the ER-mitochondria encounter structure (ERMES) or MDM complex, composed of MMM1, MDM10, MDM12 and MDM34. An MMM1 homodimer associates with one molecule of MDM12 on each side in a pairwise head-to-tail manner, and the SMP-LTD domains of MMM1 and MDM12 generate a continuous hydrophobic tunnel for phospholipid trafficking.

It localises to the mitochondrion outer membrane. The protein localises to the endoplasmic reticulum membrane. Its function is as follows. Component of the ERMES/MDM complex, which serves as a molecular tether to connect the endoplasmic reticulum (ER) and mitochondria. Components of this complex are involved in the control of mitochondrial shape and protein biogenesis, and function in nonvesicular lipid trafficking between the ER and mitochondria. MDM12 is required for the interaction of the ER-resident membrane protein MMM1 and the outer mitochondrial membrane-resident beta-barrel protein MDM10. The MDM12-MMM1 subcomplex functions in the major beta-barrel assembly pathway that is responsible for biogenesis of all mitochondrial outer membrane beta-barrel proteins, and acts in a late step after the SAM complex. The MDM10-MDM12-MMM1 subcomplex further acts in the TOM40-specific pathway after the action of the MDM12-MMM1 complex. Essential for establishing and maintaining the structure of mitochondria and maintenance of mtDNA nucleoids. The sequence is that of Mitochondrial distribution and morphology protein 12 from Pyricularia oryzae (strain 70-15 / ATCC MYA-4617 / FGSC 8958) (Rice blast fungus).